The sequence spans 568 residues: MGGIMAPKDIMTNTHAKSILNSMNSLRKSNTLCDVTLRVEQKDFPAHRIVLAACSDYFCAMFTSELSEKGKPYVDIQGLTASTMEILLDFVYTETVHVTVENVQELLPAACLLQLKGVKQACCEFLESQLDPSNCLGIRDFAETHNCVDLMQAAEVFSQKHFPEVVQHEEFILLSQGEVEKLIKCDEIQVDSEEPVFEAVINWVKHAKKEREESLPNLLQYVRMPLLTPRYITDVIDAEPFIRCSLQCRDLVDEAKKFHLRPELRSQMQGPRTRARLGANEVLLVVGGFGSQQSPIDVVEKYDPKTQEWSFLPSITRKRRYVASVSLHDRIYVIGGYDGRSRLSSVECLDYTADEDGVWYSVAPMNVRRGLAGATTLGDMIYVSGGFDGSRRHTSMERYDPNIDQWSMLGDMQTAREGAGLVVASGVIYCLGGYDGLNILNSVEKYDPHTGHWTNVTPMATKRSGAGVALLNDHIYVVGGFDGTAHLSSVEAYNIRTDSWTTVTSMTTPRCYVGATVLRGRLYAIAGYDGNSLLSSIECYDPIIDSWEVVTSMGTQRCDAGVCVLREK.

A BTB domain is found at C33–V100. One can recognise a BACK domain in the interval C135–I236. Kelch repeat units lie at residues V282–D329, I331–D379, M380–G426, V427–D473, I475–G520, and L522–E567. An interaction with DVL3 region spans residues Q405–K568.

Component of the BCR(KLHL12) E3 ubiquitin ligase complex, at least composed of CUL3 and KLHL12 and RBX1. This complex interacts with DVL3 upon activation of the Wnt signaling pathway by WNT3A. Interacts with DRD4, KLHL2 and SEC31A. Interacts with PEF1 and PDCD6/ALG-2; interaction takes place in response to cytosolic calcium increase and leads to bridge together the BCR(KLHL12) complex and SEC31 (SEC31A or SEC31B). In terms of processing, ubiquitinated by the SCF(FBXL17) complex, leading to its degradation by the proteasome: ubiquitination by the SCF(FBXL17) complex takes place when aberrant BTB domain dimers are formed. As to expression, ubiquitously expressed. Highly expressed in testis and at lower levels in the submandibular salivary gland.

It localises to the cytoplasmic vesicle. The protein localises to the COPII-coated vesicle. It functions in the pathway protein modification; protein ubiquitination. Functionally, substrate-specific adapter of a BCR (BTB-CUL3-RBX1) E3 ubiquitin ligase complex that acts as a negative regulator of Wnt signaling pathway and ER-Golgi transport. The BCR(KLHL12) complex is involved in ER-Golgi transport by regulating the size of COPII coats, thereby playing a key role in collagen export, which is required for embryonic stem (ES) cells division: BCR(KLHL12) acts by mediating monoubiquitination of SEC31 (SEC31A or SEC31B). The BCR(KLHL12) complex is also involved in neural crest specification: in response to cytosolic calcium increase, interacts with the heterodimer formed with PEF1 and PDCD6/ALG-2, leading to bridge together the BCR(KLHL12) complex and SEC31 (SEC31A or SEC31B), promoting monoubiquitination of SEC31 and subsequent collagen export. As part of the BCR(KLHL12) complex, also acts as a negative regulator of the Wnt signaling pathway by mediating ubiquitination and subsequent proteolysis of DVL3. The BCR(KLHL12) complex also mediates polyubiquitination of DRD4 and PEF1, without leading to degradation of these proteins. The protein is Kelch-like protein 12 (KLHL12) of Homo sapiens (Human).